The chain runs to 188 residues: MEDEKSFSDICGGRLALRCRYYSPYCREFGLSSARLSLCSLTAVTCAVWLAAYGLFTLCENSMVLSATIFITILGLLGYLHFVKIDQETLLIIDSLGIQMTSSYASGKESTTFIEMDKVKDIIINEAIYMQKVIYYLCILLKEPGKPHEISRVVPVFQSAKPRLDCLIEVYRSCQEVLAHQKATATSL.

Belongs to the PIGH family. In terms of assembly, component of the glycosylphosphatidylinositol-N-acetylglucosaminyltransferase (GPI-GnT) complex composed at least by PIGA, PIGC, PIGH, PIGP, PIGQ, PIGY and DPM2. Interacts with PIGQ.

It is found in the cytoplasm. It participates in glycolipid biosynthesis; glycosylphosphatidylinositol-anchor biosynthesis. Part of the glycosylphosphatidylinositol-N-acetylglucosaminyltransferase (GPI-GnT) complex that catalyzes the transfer of N-acetylglucosamine from UDP-N-acetylglucosamine to phosphatidylinositol and participates in the first step of GPI biosynthesis. The protein is Phosphatidylinositol N-acetylglucosaminyltransferase subunit H of Mus musculus (Mouse).